An 89-amino-acid chain; its full sequence is Small ribosomal subunit protein uS15 (89 aa).

The protein belongs to the universal ribosomal protein uS15 family. In terms of assembly, part of the 30S ribosomal subunit. Forms a bridge to the 50S subunit in the 70S ribosome, contacting the 23S rRNA.

In terms of biological role, one of the primary rRNA binding proteins, it binds directly to 16S rRNA where it helps nucleate assembly of the platform of the 30S subunit by binding and bridging several RNA helices of the 16S rRNA. Functionally, forms an intersubunit bridge (bridge B4) with the 23S rRNA of the 50S subunit in the ribosome. This chain is Small ribosomal subunit protein uS15, found in Methylorubrum populi (strain ATCC BAA-705 / NCIMB 13946 / BJ001) (Methylobacterium populi).